Here is a 596-residue protein sequence, read N- to C-terminus: Protein Malvolio (596 aa).

The tract at residues 1–34 (MSSNEAYHEPGAGGDGPGGSSGASGGGSQRSNQL) is disordered. Residues 11–28 (GAGGDGPGGSSGASGGGS) show a composition bias toward gly residues. Asparagine 41 carries an N-linked (GlcNAc...) asparagine glycan. 7 consecutive transmembrane segments (helical) span residues 77-97 (LWAF…PGNI), 105-125 (AAAK…GLLM), 154-174 (WILW…EVIG), 186-206 (VVPL…FLFL), 216-236 (FLFG…YIVS), 263-283 (AVGV…SALV), and 309-329 (VALF…AHGM). Asparagine 359 is a glycosylation site (N-linked (GlcNAc...) asparagine). 5 consecutive transmembrane segments (helical) span residues 373–393 (LFLG…GILA), 424–444 (VLVT…FSKM), 463–483 (PFAA…GEFV), 490–510 (IVSI…VVVQ), and 520–540 (LLAL…YLVI). Asparagine 574 carries N-linked (GlcNAc...) asparagine glycosylation.

The protein belongs to the NRAMP family. Expressed in macrophages and in the nervous system.

Its subcellular location is the membrane. Functionally, putative transporter required for normal taste behavior. May be a nitrite/nitrate transporter. This is Protein Malvolio (Mvl) from Drosophila melanogaster (Fruit fly).